Consider the following 98-residue polypeptide: Large ribosomal subunit protein uL23 (98 aa).

The protein belongs to the universal ribosomal protein uL23 family. In terms of assembly, part of the 50S ribosomal subunit. Contacts protein L29, and trigger factor when it is bound to the ribosome.

Functionally, one of the early assembly proteins it binds 23S rRNA. One of the proteins that surrounds the polypeptide exit tunnel on the outside of the ribosome. Forms the main docking site for trigger factor binding to the ribosome. This chain is Large ribosomal subunit protein uL23, found in Nitrobacter hamburgensis (strain DSM 10229 / NCIMB 13809 / X14).